The sequence spans 368 residues: 2-aminoethylphosphonate--pyruvate transaminase (368 aa).

Lys-192 bears the N6-(pyridoxal phosphate)lysine mark.

Belongs to the class-V pyridoxal-phosphate-dependent aminotransferase family. PhnW subfamily. Homodimer. It depends on pyridoxal 5'-phosphate as a cofactor.

It catalyses the reaction (2-aminoethyl)phosphonate + pyruvate = phosphonoacetaldehyde + L-alanine. Its function is as follows. Involved in phosphonate degradation. The sequence is that of 2-aminoethylphosphonate--pyruvate transaminase from Pseudomonas putida (strain ATCC 47054 / DSM 6125 / CFBP 8728 / NCIMB 11950 / KT2440).